The sequence spans 92 residues: Acylphosphatase (92 aa).

Cysteine 5 and cysteine 49 form a disulfide bridge. In terms of domain architecture, Acylphosphatase-like spans 5 to 92 (CIIAWIYGRV…SGELTDFRIR (88 aa)). Active-site residues include arginine 20 and asparagine 38.

This sequence belongs to the acylphosphatase family.

The enzyme catalyses an acyl phosphate + H2O = a carboxylate + phosphate + H(+). This chain is Acylphosphatase, found in Escherichia coli O1:K1 / APEC.